We begin with the raw amino-acid sequence, 65 residues long: NADH dehydrogenase [ubiquinone] 1 alpha subcomplex subunit 1 (65 aa).

The helical transmembrane segment at 3 to 23 (LVWLEAMLPLGIIGGMLCIMG) threads the bilayer.

Belongs to the complex I NDUFA1 subunit family. Complex I is composed of at least 49 different subunits.

The protein localises to the mitochondrion inner membrane. Functionally, accessory subunit of the mitochondrial membrane respiratory chain NADH dehydrogenase (Complex I), that is believed not to be involved in catalysis. Complex I functions in the transfer of electrons from NADH to the respiratory chain. The immediate electron acceptor for the enzyme is believed to be ubiquinone. The sequence is that of NADH dehydrogenase [ubiquinone] 1 alpha subcomplex subunit 1 from Arabidopsis thaliana (Mouse-ear cress).